Here is a 419-residue protein sequence, read N- to C-terminus: Tyrosine--tRNA ligase 2 (419 aa).

Tyrosine 34 is an L-tyrosine binding site. The short motif at 39-48 (PTGDSMHIGH) is the 'HIGH' region element. L-tyrosine contacts are provided by tyrosine 168 and glutamine 172. The short motif at 230 to 234 (KFGKS) is the 'KMSKS' region element. Lysine 233 lines the ATP pocket. Positions 352–418 (KNIVEWLVDL…GKKNYSLVKL (67 aa)) constitute an S4 RNA-binding domain.

This sequence belongs to the class-I aminoacyl-tRNA synthetase family. TyrS type 1 subfamily. In terms of assembly, homodimer.

The protein localises to the cytoplasm. The enzyme catalyses tRNA(Tyr) + L-tyrosine + ATP = L-tyrosyl-tRNA(Tyr) + AMP + diphosphate + H(+). In terms of biological role, catalyzes the attachment of tyrosine to tRNA(Tyr) in a two-step reaction: tyrosine is first activated by ATP to form Tyr-AMP and then transferred to the acceptor end of tRNA(Tyr). The sequence is that of Tyrosine--tRNA ligase 2 from Bacillus cereus (strain ZK / E33L).